Reading from the N-terminus, the 77-residue chain is RNA-binding protein Hfq (77 aa).

Positions 10 to 70 (DIFLNSARKN…ITTVTPEKPI (61 aa)) constitute a Sm domain.

This sequence belongs to the Hfq family. Homohexamer.

Its function is as follows. RNA chaperone that binds small regulatory RNA (sRNAs) and mRNAs to facilitate mRNA translational regulation in response to envelope stress, environmental stress and changes in metabolite concentrations. Also binds with high specificity to tRNAs. This Clostridium botulinum (strain Eklund 17B / Type B) protein is RNA-binding protein Hfq.